We begin with the raw amino-acid sequence, 593 residues long: Copine-5 (593 aa).

Residues 2–134 (EQPEDMASLS…SSGSRLEKPL (133 aa)) enclose the C2 1 domain. S19 carries the phosphoserine modification. Residues D38, D44, D98, D100, S103, K108, and D110 each coordinate Ca(2+). Phosphoserine is present on S103. S140 bears the Phosphoserine mark. A C2 2 domain is found at 161–284 (KCGTIILSAE…ARGQSQFNIY (124 aa)). Ca(2+) is bound by residues D192, D198, D254, D256, and D262. In terms of domain architecture, VWFA spans 328–554 (NFTVAIDFTA…DVLAEIPDQL (227 aa)). A disordered region spans residues 562-593 (GIRPRPPPAAPAQSPPQSPAHSPPGSPVHTHI). The segment covering 565-587 (PRPPPAAPAQSPPQSPAHSPPGS) has biased composition (pro residues).

The protein belongs to the copine family. Requires Ca(2+) as cofactor. Expressed in the cerebra and cerebellum of newborn brain. Expressed in the eye, lung and muscles but weakly expressed in the adult brain (at protein level).

It localises to the perikaryon. The protein localises to the cell projection. In terms of biological role, probable calcium-dependent phospholipid-binding protein that may play a role in calcium-mediated intracellular processes. Plays a role in dendrite formation by melanocytes. The polypeptide is Copine-5 (Mus musculus (Mouse)).